The sequence spans 142 residues: SEPGRREGKRSYSMEHFRWGKPVGKKRRPVKVYPNGAEDESAEAFPLEFKRELAGERPEPALGPEGAAEGMAALADLEYGLVAKAEVAEKKDDGPYKMEHFRWGSPGKDKRYGGFMTSEKSQTPLVTLFKNAIIKNAHKKGQ.

The propeptide occupies 1–8 (SEPGRREG). Val-23 carries the valine amide modification. Ser-41 is subject to Phosphoserine.

The protein belongs to the POMC family. Post-translationally, specific enzymatic cleavages at paired basic residues yield the different active peptides. ACTH and MSH are produced by the pituitary gland.

It localises to the secreted. Its function is as follows. Stimulates the adrenal glands to release cortisol. Anorexigenic peptide. Increases the pigmentation of skin by increasing melanin production in melanocytes. Functionally, increases the pigmentation of skin by increasing melanin production in melanocytes. In terms of biological role, endogenous orexigenic opiate. Its function is as follows. Endogenous opiate. The protein is Pro-opiomelanocortin (POMC) of Neovison vison (American mink).